The chain runs to 254 residues: Imidazole glycerol phosphate synthase subunit HisF (254 aa).

Catalysis depends on residues Asp12 and Asp132.

The protein belongs to the HisA/HisF family. Heterodimer of HisH and HisF.

It localises to the cytoplasm. The enzyme catalyses 5-[(5-phospho-1-deoxy-D-ribulos-1-ylimino)methylamino]-1-(5-phospho-beta-D-ribosyl)imidazole-4-carboxamide + L-glutamine = D-erythro-1-(imidazol-4-yl)glycerol 3-phosphate + 5-amino-1-(5-phospho-beta-D-ribosyl)imidazole-4-carboxamide + L-glutamate + H(+). It functions in the pathway amino-acid biosynthesis; L-histidine biosynthesis; L-histidine from 5-phospho-alpha-D-ribose 1-diphosphate: step 5/9. Functionally, IGPS catalyzes the conversion of PRFAR and glutamine to IGP, AICAR and glutamate. The HisF subunit catalyzes the cyclization activity that produces IGP and AICAR from PRFAR using the ammonia provided by the HisH subunit. In Symbiobacterium thermophilum (strain DSM 24528 / JCM 14929 / IAM 14863 / T), this protein is Imidazole glycerol phosphate synthase subunit HisF.